Reading from the N-terminus, the 363-residue chain is Chorismate synthase (363 aa).

The tract at residues 44 to 63 is disordered; sequence DLDRRKPGTSRHTTQRQEPD. Residues arginine 48 and arginine 54 each coordinate NADP(+). FMN is bound by residues 125–127, 237–238, glycine 277, 292–296, and arginine 318; these read RSS, NA, and KATSS.

This sequence belongs to the chorismate synthase family. Homotetramer. It depends on FMNH2 as a cofactor.

The catalysed reaction is 5-O-(1-carboxyvinyl)-3-phosphoshikimate = chorismate + phosphate. It functions in the pathway metabolic intermediate biosynthesis; chorismate biosynthesis; chorismate from D-erythrose 4-phosphate and phosphoenolpyruvate: step 7/7. Functionally, catalyzes the anti-1,4-elimination of the C-3 phosphate and the C-6 proR hydrogen from 5-enolpyruvylshikimate-3-phosphate (EPSP) to yield chorismate, which is the branch point compound that serves as the starting substrate for the three terminal pathways of aromatic amino acid biosynthesis. This reaction introduces a second double bond into the aromatic ring system. This chain is Chorismate synthase, found in Pseudomonas fluorescens (strain SBW25).